The sequence spans 289 residues: MTLTLVKAWTAAKDRLKDAGIDQPSIDARLMLEVAAGVTRTEIVTDPYRELSAEQIATLNDYLERRARREPVSHIIGRKGFWKILLQVNKNVLTPRPETEVIVDEVLKAFPEHMAFSMLDLGVGSGTILLAVLAERPAAKGLGIDASSEALAVARENAANLDLNTRAALLHGDWTTGLGSDSFDLVVSNPPYIPTEVIDTLEPEVRIHEPRLALDGGPDGLAAYRELAPEILRVLKPGGLFAVEIGYDQSQAVEALFRAAGATEVRTVKDLSTHDRVVLGVKNPLESPA.

S-adenosyl-L-methionine-binding positions include 122–126 (GVGSG), aspartate 145, tryptophan 174, and asparagine 189. Substrate is bound at residue 189–192 (NPPY).

The protein belongs to the protein N5-glutamine methyltransferase family. PrmC subfamily.

It catalyses the reaction L-glutaminyl-[peptide chain release factor] + S-adenosyl-L-methionine = N(5)-methyl-L-glutaminyl-[peptide chain release factor] + S-adenosyl-L-homocysteine + H(+). Its function is as follows. Methylates the class 1 translation termination release factors RF1/PrfA and RF2/PrfB on the glutamine residue of the universally conserved GGQ motif. This is Release factor glutamine methyltransferase from Caulobacter vibrioides (strain ATCC 19089 / CIP 103742 / CB 15) (Caulobacter crescentus).